A 192-amino-acid chain; its full sequence is Peptide deformylase (192 aa).

2 residues coordinate Fe cation: Cys-102 and His-145. Residue Glu-146 is part of the active site. His-149 is a Fe cation binding site.

The protein belongs to the polypeptide deformylase family. Requires Fe(2+) as cofactor.

It carries out the reaction N-terminal N-formyl-L-methionyl-[peptide] + H2O = N-terminal L-methionyl-[peptide] + formate. Removes the formyl group from the N-terminal Met of newly synthesized proteins. Requires at least a dipeptide for an efficient rate of reaction. N-terminal L-methionine is a prerequisite for activity but the enzyme has broad specificity at other positions. In Thermus thermophilus (strain ATCC BAA-163 / DSM 7039 / HB27), this protein is Peptide deformylase.